Consider the following 434-residue polypeptide: Gamma-glutamyl phosphate reductase (434 aa).

This sequence belongs to the gamma-glutamyl phosphate reductase family.

The protein resides in the cytoplasm. It carries out the reaction L-glutamate 5-semialdehyde + phosphate + NADP(+) = L-glutamyl 5-phosphate + NADPH + H(+). Its pathway is amino-acid biosynthesis; L-proline biosynthesis; L-glutamate 5-semialdehyde from L-glutamate: step 2/2. Functionally, catalyzes the NADPH-dependent reduction of L-glutamate 5-phosphate into L-glutamate 5-semialdehyde and phosphate. The product spontaneously undergoes cyclization to form 1-pyrroline-5-carboxylate. The polypeptide is Gamma-glutamyl phosphate reductase (Nostoc sp. (strain PCC 7120 / SAG 25.82 / UTEX 2576)).